The primary structure comprises 372 residues: MGLPLRIFAGNGIGGWCLRLFLFGSLILLLRPLIFYSNTTMKKLKTEYPIYHRHLSALKRNFYYTMDAQLGGIRNVVLINRPCFAASDNFLTLMGQNWYLKERNINVLSDICFPLSNNAHDSLPTFNNGSDLFNPLYFAVLNAATPARFTFHLFNHVMDSVVPFDEAKKFKVRSFPINYAEYADDECQLALKKIRPIPDKYLVSTRVLSDSRYLELSGAVVAFAPDASSSLLFELADIKQHKKTSADILIFLSKDHNLPVSFYDNYKLKYTLHFWQPPSFPDSSTIDDQAKLLFDYVVSQVVKYPYFVTDIYQIHLLGVYLNLKHVYLLENDDVEDAYYERQWMQAFQRKNVVAVAEELQTALRIIEQWKQL.

Topologically, residues 1–12 (MGLPLRIFAGNG) are cytoplasmic. A helical; Signal-anchor for type II membrane protein transmembrane segment spans residues 13 to 35 (IGGWCLRLFLFGSLILLLRPLIF). At 36 to 372 (YSNTTMKKLK…LRIIEQWKQL (337 aa)) the chain is on the lumenal side. Asn38 and Asn128 each carry an N-linked (GlcNAc...) asparagine glycan.

Its subcellular location is the golgi apparatus membrane. In terms of biological role, involved in cell wall biogenesis. Has a role in the addition of Gal-beta1,3 moeities to galactomannans and their subsequent pyruvylation. Has a role in meiosis. This chain is Pyruvylated Gal-beta-1,3-epitope synthesis protein 5 (pvg5), found in Schizosaccharomyces pombe (strain 972 / ATCC 24843) (Fission yeast).